The primary structure comprises 525 residues: Nucleolar and spindle-associated protein 1-A (525 aa).

Disordered stretches follow at residues 46–205, 248–292, 373–397, and 451–525; these read ESKD…LHEA, EKTP…RFSA, TPES…PEKA, and SLSR…VPVQ. Positions 58–69 are enriched in polar residues; that stretch reads SSLTDTDELNSS. Residues 82-92 are compositionally biased toward basic residues; sequence THRRGRGRKPL. Polar residues predominate over residues 106–127; sequence SVGTGTESLASETDNTQDQNCL. Over residues 160–169 the composition is skewed to basic and acidic residues; the sequence is TTEKRQKKAS. Polar residues predominate over residues 270–285; the sequence is PPTTGASPSRTPTNQR. A compositionally biased stretch (polar residues) spans 476-494; it reads CGSNNNVSVLKNNFKQPHL. Residues 495 to 514 are compositionally biased toward basic and acidic residues; that stretch reads QTREDRRKQHEQDRKGKRDQ.

It belongs to the NUSAP family. As to quaternary structure, interacts with DNA. Interacts with microtubules, ipo7, kpna2 and kpnb1. Microtubule stabilization is inhibited by ipo7 and kpna2, while microtubule bundling is inhibited by kpnb1. Active GTP-bound ran causes dissociation of ipo7 and kpnb1.

It localises to the cytoplasm. The protein resides in the nucleus. The protein localises to the cytoskeleton. Its subcellular location is the spindle. Functionally, microtubule-associated protein with the capacity to bundle and stabilize microtubules. May associate with chromosomes and promote the organization of meiotic or mitotic spindle microtubules around them. The chain is Nucleolar and spindle-associated protein 1-A (nusap1-a) from Xenopus laevis (African clawed frog).